The primary structure comprises 147 residues: Small ribosomal subunit protein uS12 (147 aa).

This sequence belongs to the universal ribosomal protein uS12 family. As to quaternary structure, part of the 30S ribosomal subunit.

In terms of biological role, with S4 and S5 plays an important role in translational accuracy. Located at the interface of the 30S and 50S subunits. The chain is Small ribosomal subunit protein uS12 from Sulfolobus acidocaldarius (strain ATCC 33909 / DSM 639 / JCM 8929 / NBRC 15157 / NCIMB 11770).